The following is a 511-amino-acid chain: Glucan endo-1,3-beta-glucosidase 1 (511 aa).

The first 28 residues, 1–28 (MAFTSMVSTVPVLFFFFTLLLISANSSS), serve as a signal peptide directing secretion. Asn109 carries an N-linked (GlcNAc...) asparagine glycan. Glu137 functions as the Proton donor in the catalytic mechanism. 2 N-linked (GlcNAc...) asparagine glycosylation sites follow: Asn192 and Asn274. Glu284 serves as the catalytic Nucleophile. N-linked (GlcNAc...) asparagine glycosylation is found at Asn374, Asn378, Asn407, Asn473, and Asn480. Cys382 and Cys445 form a disulfide bridge. A lipid anchor (GPI-anchor amidated alanine) is attached at Ala485. Residues 486–511 (AGEATSRSLSRGFCVTIMILVTFSIL) constitute a propeptide, removed in mature form.

The protein belongs to the glycosyl hydrolase 17 family. Contains two additional disulfide bonds.

It is found in the cell membrane. It catalyses the reaction Hydrolysis of (1-&gt;3)-beta-D-glucosidic linkages in (1-&gt;3)-beta-D-glucans.. This Arabidopsis thaliana (Mouse-ear cress) protein is Glucan endo-1,3-beta-glucosidase 1.